The following is a 273-amino-acid chain: Protein FAM210A (273 aa).

A disordered region spans residues 94–116 (RVLSSSSTSQETPSEKKEETDPL). The segment covering 106-116 (PSEKKEETDPL) has biased composition (basic and acidic residues). Positions 118–230 (DKSISLYQRF…GYMSTPPPVK (113 aa)) constitute a DUF1279 domain. Residues 138-158 (LIPVHLITSGIWFGTFYYATI) traverse the membrane as a helical segment. Residues 233-269 (LQGRMEETKELITEKMEETKDRLTEKLQETKGKVSFK) adopt a coiled-coil conformation.

It belongs to the FAM210 family. In terms of assembly, interacts with ATAD3A. In terms of tissue distribution, expressed in skeletal muscle, heart, brain but not in bone.

The protein resides in the membrane. Its subcellular location is the mitochondrion. The protein localises to the cytoplasm. Functionally, may play a role in the structure and strength of both muscle and bone. This Mus musculus (Mouse) protein is Protein FAM210A (Fam210a).